The primary structure comprises 332 residues: tRNA dimethylallyltransferase (332 aa).

Glycine 30–threonine 37 contributes to the ATP binding site. Threonine 32 to threonine 37 provides a ligand contact to substrate. The interval aspartate 57–glutamine 60 is interaction with substrate tRNA.

It belongs to the IPP transferase family. As to quaternary structure, monomer. It depends on Mg(2+) as a cofactor.

The enzyme catalyses adenosine(37) in tRNA + dimethylallyl diphosphate = N(6)-dimethylallyladenosine(37) in tRNA + diphosphate. Catalyzes the transfer of a dimethylallyl group onto the adenine at position 37 in tRNAs that read codons beginning with uridine, leading to the formation of N6-(dimethylallyl)adenosine (i(6)A). In Natranaerobius thermophilus (strain ATCC BAA-1301 / DSM 18059 / JW/NM-WN-LF), this protein is tRNA dimethylallyltransferase.